The chain runs to 167 residues: Cytochrome c-type biogenesis protein CcmE (167 aa).

The Cytoplasmic segment spans residues 1–7 (MTRKQRR). A helical; Signal-anchor for type II membrane protein transmembrane segment spans residues 8 to 28 (LLMIGGAGVVLIVAVGLVLNA). Residues 29–167 (LRDSIVFFST…TSANAAEGGK (139 aa)) lie on the Periplasmic side of the membrane. Positions 122 and 126 each coordinate heme. Residues 137 to 150 (KDGHWKDDYGKKSP) show a composition bias toward basic and acidic residues. A disordered region spans residues 137-167 (KDGHWKDDYGKKSPGETTAGQTSANAAEGGK). Polar residues predominate over residues 151-161 (GETTAGQTSAN).

The protein belongs to the CcmE/CycJ family.

It localises to the cell inner membrane. Its function is as follows. Heme chaperone required for the biogenesis of c-type cytochromes. Transiently binds heme delivered by CcmC and transfers the heme to apo-cytochromes in a process facilitated by CcmF and CcmH. This Rhodopseudomonas palustris (strain ATCC BAA-98 / CGA009) protein is Cytochrome c-type biogenesis protein CcmE.